The sequence spans 1483 residues: Neuropathy target esterase sws (1483 aa).

The Lumenal segment spans residues 1-34 (MDVLELLRASANGCYNTLFSDAWFQYVSKQIATT). A helical membrane pass occupies residues 35 to 55 (MYWYGALLVIGVLFIAWFLYF). Topologically, residues 56-1483 (KRLARLRLRD…ENLTKTDTKN (1428 aa)) are cytoplasmic. Residue 174 to 301 (IFGHFEKPIF…IRVIQVIMIR (128 aa)) coordinates a nucleoside 3',5'-cyclic phosphate. Disordered regions lie at residues 348–380 (ASRP…PNAN) and 404–440 (SSAV…GTSI). The segment covering 413-440 (GTRRSSTTYGPSGESPNGNANTAPGTSI) has biased composition (polar residues). A phosphoserine mark is found at S418 and S424. A nucleoside 3',5'-cyclic phosphate contacts are provided by residues 456 to 585 (ELGL…VVRR) and 574 to 701 (IVLD…LSHR). The PNPLA domain maps to 927 to 1093 (LVLGGGGARG…VNNLPGHLWR (167 aa)). A GXGXXG motif is present at residues 931-936 (GGGARG). Residues 958–962 (GVSIG) carry the GXSXG motif. S960 serves as the catalytic Nucleophile. The active-site Proton acceptor is D1080. The DGA/G signature appears at 1080 to 1082 (DGG). S1174 is modified (phosphoserine). The disordered stretch occupies residues 1349 to 1483 (DKATQSTPPT…ENLTKTDTKN (135 aa)). The segment covering 1351 to 1373 (ATQSTPPTPNKQHALSPTSSQTN) has biased composition (polar residues). Basic and acidic residues predominate over residues 1382–1396 (KPKEKQPSYDKLDRE). Low complexity predominate over residues 1410–1419 (ERSSMQQRDS). A compositionally biased stretch (basic and acidic residues) spans 1445–1458 (LNKPEQQPEQKPVP). A compositionally biased stretch (low complexity) spans 1465-1474 (QKQQDQQQQE).

The protein belongs to the NTE family. As to quaternary structure, interacts with Pka-C3; interaction inhibits the catalytic function of Pka-C3 and the esterase activity of sws.

It localises to the endoplasmic reticulum membrane. It carries out the reaction a 1-acyl-sn-glycero-3-phosphocholine + H2O = sn-glycerol 3-phosphocholine + a fatty acid + H(+). Functionally, phospholipase B that deacylates intracellular phosphatidylcholine (PtdCho), generating glycerophosphocholine (GroPtdCho). This deacylation occurs at both sn-2 and sn-1 positions of PtdCho. Its specific chemical modification by certain organophosphorus (OP) compounds leads to distal axonopathy. Plays a role in the signaling mechanism between neurons and glia that regulates glia wrapping during development of the adult brain. Essential for membrane lipid homeostasis and cell survival in both neurons and glia of the adult brain. The protein is Neuropathy target esterase sws of Drosophila virilis (Fruit fly).